Here is a 1642-residue protein sequence, read N- to C-terminus: Cholesterol transporter ABCA5 (1642 aa).

Residues 32-52 form a helical membrane-spanning segment; the sequence is SVQEILFPLFFLFWLILISMM. N86 and N190 each carry an N-linked (GlcNAc...) asparagine glycan. A run of 6 helical transmembrane segments spans residues 220 to 240, 264 to 284, 297 to 317, 327 to 347, 355 to 375, and 396 to 416; these read VILI…AIHI, LSWV…MAVI, IVIF…ALML, VGVV…LIVL, LVWL…AQVM, and LIIT…LAVY. A glycan (N-linked (GlcNAc...) asparagine) is linked at N458. The ABC transporter 1 domain occupies 478–713; the sequence is IRISGIQKAY…WGIGYRLSMY (236 aa). Residue 514 to 521 participates in ATP binding; sequence GHSGTGKS. A helical transmembrane segment spans residues 866–886; that stretch reads LLLLLIFFAVQIFMFLVHHSF. N919 carries an N-linked (GlcNAc...) asparagine glycan. The chain crosses the membrane as a helical span at residues 967-987; sequence VFTAVFNSTMVYSLPVMMNII. N996 carries an N-linked (GlcNAc...) asparagine glycan. Transmembrane regions (helical) follow at residues 1021–1041, 1071–1091, 1102–1122, 1139–1159, 1164–1184, and 1207–1227; these read LYFQ…YFAM, VVDI…LFAF, FLAV…FTYI, FIYS…FFLG, AVFH…GCLI, and LLVA…LLQH. Residues 1290–1533 form the ABC transporter 2 domain; that stretch reads IMVYNLHKEY…FGKGYFLEIK (244 aa). Position 1333–1340 (1333–1340) interacts with ATP; sequence GPNGAGKS.

It belongs to the ABC transporter superfamily. ABCA family. In terms of processing, N-glycosylated. As to expression, expressed in testis, epididymis, lung and brain.

The protein resides in the lysosome membrane. Its subcellular location is the late endosome membrane. The protein localises to the golgi apparatus membrane. It is found in the cell membrane. It carries out the reaction cholesterol(in) + ATP + H2O = cholesterol(out) + ADP + phosphate + H(+). Functionally, cholesterol efflux transporter in macrophages that is responsible for APOAI/high-density lipoproteins (HDL) formation at the plasma membrane under high cholesterol levels and participates in reverse cholesterol transport. May play a role in the processing of autolysosomes. This Rattus norvegicus (Rat) protein is Cholesterol transporter ABCA5.